The sequence spans 883 residues: Alanine--tRNA ligase (883 aa).

4 residues coordinate Zn(2+): His-570, His-574, Cys-672, and His-676.

This sequence belongs to the class-II aminoacyl-tRNA synthetase family. Zn(2+) is required as a cofactor.

It localises to the cytoplasm. The catalysed reaction is tRNA(Ala) + L-alanine + ATP = L-alanyl-tRNA(Ala) + AMP + diphosphate. In terms of biological role, catalyzes the attachment of alanine to tRNA(Ala) in a two-step reaction: alanine is first activated by ATP to form Ala-AMP and then transferred to the acceptor end of tRNA(Ala). Also edits incorrectly charged Ser-tRNA(Ala) and Gly-tRNA(Ala) via its editing domain. The sequence is that of Alanine--tRNA ligase from Heliobacterium modesticaldum (strain ATCC 51547 / Ice1).